We begin with the raw amino-acid sequence, 553 residues long: Thioredoxin domain-containing protein 2 (553 aa).

Disordered regions lie at residues 1 to 37 (MDVDKELGMESVKAGASGKPEMRLGTQEETSEGDANE) and 77 to 442 (TEES…EETM). Residues 99-143 (PKQDDSPKSSEETIQPKEGDIPKAPEETIQSKKEDLPKSSEKAIQ) show a composition bias toward basic and acidic residues. 22 tandem repeats follow at residues 113–127 (QPKEGDIPKAPEETI), 128–142 (QSKKEDLPKSSEKAI), 143–157 (QPKESNIPKSSAKPI), 158–172 (QPKLGNIPKASVKPS), 173–187 (QPKEGDIPKAPEETI), 188–202 (QSKKEDLPKSSEEAI), 203–217 (QPKEGDIPKSSAKPI), 218–232 (QPKLGNIAKTSVKPS), 233–247 (QPKESDIPKSPEETI), 248–262 (QPKEGDIPKSSAKPI), 263–277 (QPKLGNIPKASVKPS), 278–292 (QPKEGDISKSPEEAI), 293–307 (QPKEGDLPKSLEEAI), 308–322 (QPKEGDIPKSPEEAI), 323–337 (QPKEGDIPKSLEEAI), 338–352 (QPKEGDIPKSPEETI), 353–367 (QPKKGDIPKSPEEAI), 368–382 (QPKEGDIPKSPKQAI), 383–397 (QPKEGDIPKSLEEAI), 398–412 (PPKEIDIPKSPEETI), 413–427 (QPKEDDSPKSLEEAT), and 428–442 (PSKEGDILKPEEETM). The interval 113 to 442 (QPKEGDIPKA…DILKPEEETM (330 aa)) is 22 X 15 AA approximate tandem repeat of Q-P-K-X-G-D-I-P-K-S-[PS]-E-[KE]-X-I. Residues 173 to 209 (QPKEGDIPKAPEETIQSKKEDLPKSSEEAIQPKEGDI) are compositionally biased toward basic and acidic residues. Residues 233 to 254 (QPKESDIPKSPEETIQPKEGDI) are compositionally biased toward basic and acidic residues. Composition is skewed to basic and acidic residues over residues 278–376 (QPKE…DIPK) and 385–439 (KEGD…KPEE). Serine 362 carries the phosphoserine modification. Serine 392 is modified (phosphoserine). One can recognise a Thioredoxin domain in the interval 429–553 (SKEGDILKPE…KLEAVIAELK (125 aa)). Cysteine 480 and cysteine 483 are oxidised to a cystine.

As to expression, testis-specific. Only expressed during spermiogenesis, prominently in round and elongating spermatids.

It localises to the cytoplasm. Its function is as follows. Probably plays a regulatory role in sperm development. May participate in regulation of fibrous sheath (FS) assembly by supporting the formation of disulfide bonds during sperm tail morphogenesis. May also be required to rectify incorrect disulfide pairing and generate suitable pairs between the FS constituents. Can reduce disulfide bonds in vitro in the presence of NADP and thioredoxin reductase. This is Thioredoxin domain-containing protein 2 (TXNDC2) from Homo sapiens (Human).